The sequence spans 175 residues: Alpha-crystallin B chain (175 aa).

Residue methionine 1 is modified to N-acetylmethionine. 3 positions are modified to phosphoserine: serine 19, serine 45, and serine 59. One can recognise a sHSP domain in the interval 56 to 164 (RAPSWIDTGL…PERTIPITRE (109 aa)). Residue histidine 83 participates in Zn(2+) binding. At lysine 92 the chain carries N6-acetyllysine. 4 residues coordinate Zn(2+): histidine 104, glutamate 106, histidine 111, and histidine 119. A disordered region spans residues 142 to 175 (VLTVNGPRKQASGPERTIPITREEKPAVTAAPKK). Position 166 is an N6-acetyllysine (lysine 166). Threonine 170 carries O-linked (GlcNAc) threonine glycosylation.

This sequence belongs to the small heat shock protein (HSP20) family. Heteromer composed of three CRYAA and one CRYAB subunits. Aggregates with homologous proteins, including the small heat shock protein HSPB1, to form large heteromeric complexes. Inter-subunit bridging via zinc ions enhances stability, which is crucial as there is no protein turn over in the lens. Interacts with HSPBAP1. Interacts with TTN/titin. Interacts with TMEM109; in the cellular response to DNA damage. Interacts with DES; binds rapidly during early stages of DES filament assembly and a reduced binding seen in the later stages. Interacts with TMED10; the interaction mediates the translocation from the cytoplasm into the ERGIC (endoplasmic reticulum-Golgi intermediate compartment) and thereby secretion. Interacts with ATP6V1A and with MTOR, forming a ternary complex. As to expression, lens as well as other tissues.

Its subcellular location is the cytoplasm. It is found in the nucleus. The protein resides in the secreted. The protein localises to the lysosome. Functionally, may contribute to the transparency and refractive index of the lens. Has chaperone-like activity, preventing aggregation of various proteins under a wide range of stress conditions. In lens epithelial cells, stabilizes the ATP6V1A protein, preventing its degradation by the proteasome. The polypeptide is Alpha-crystallin B chain (Rattus norvegicus (Rat)).